The primary structure comprises 756 residues: Xylosyl- and glucuronyltransferase LARGE1 (756 aa).

At 1–10 (MLGICRGRRK) the chain is on the cytoplasmic side. Residues 11-31 (FLAASLSLLCIPAITWIYLFS) traverse the membrane as a helical; Signal-anchor for type II membrane protein segment. The Lumenal segment spans residues 32 to 756 (GSFEDGKPVS…LKYLTAENNS (725 aa)). Disordered regions lie at residues 43–69 (SPLE…EVRM) and 81–109 (RQLS…EGTG). The segment covering 44–58 (PLESQAHSPRYTASS) has biased composition (polar residues). The stretch at 53–95 (RYTASSQRERESLEVRMREVEEENRALRRQLSLAQGRAPSHRR) forms a coiled coil. Positions 59–69 (QRERESLEVRM) are enriched in basic and acidic residues. N-linked (GlcNAc...) asparagine glycans are attached at residues N97, N122, and N148. A xylosyltransferase activity region spans residues 138–413 (IHVAIVCAGY…FLEYDGNLLR (276 aa)). D242 and D244 together coordinate Mn(2+). A glycan (N-linked (GlcNAc...) asparagine) is linked at N272. The glucuronyltransferase activity stretch occupies residues 414-756 (RELFGCPSEA…LKYLTAENNS (343 aa)). Residues D563 and D565 each contribute to the Mn(2+) site.

The protein in the C-terminal section; belongs to the glycosyltransferase 49 family. It in the N-terminal section; belongs to the glycosyltransferase 8 family. Interacts with DAG1 (via the N-terminal domain of alpha-DAG1); the interaction increases binding of DAG1 to laminin. Interacts with B4GAT1. The cofactor is Mn(2+). As to expression, ubiquitous. Highest expression in heart, brain and skeletal muscle.

It is found in the golgi apparatus membrane. It carries out the reaction 3-O-[beta-D-GlcA-(1-&gt;3)-beta-D-Xyl-(1-&gt;4)-Rib-ol-P-Rib-ol-P-3-beta-D-GalNAc-(1-&gt;3)-beta-D-GlcNAc-(1-&gt;4)-(O-6-P-alpha-D-Man)]-Thr-[protein] + UDP-alpha-D-xylose = 3-O-[alpha-D-Xyl-(1-&gt;3)-beta-D-GlcA-(1-&gt;4)-beta-D-Xyl-(1-&gt;4)-Rib-ol-P-Rib-ol-P-3-beta-D-GalNAc-(1-&gt;3)-beta-D-GlcNAc-(1-&gt;4)-(O-6-P-alpha-D-Man)]-Thr-[protein] + UDP + H(+). The enzyme catalyses 3-O-{(1-&gt;[3)-alpha-D-Xyl-(1-&gt;3)-beta-D-GlcA-(1-&gt;](n)-4)-beta-D-Xyl-(1-&gt;4)-Rib-ol-P-Rib-ol-P-3-beta-D-GalNAc-(1-&gt;3)-beta-D-GlcNAc-(1-&gt;4)-O-6-P-alpha-D-Man}-L-Thr-[protein] + UDP-alpha-D-glucuronate = 3-O-{beta-D-GlcA-(1-&gt;[3)-alpha-D-Xyl-(1-&gt;3)-beta-D-GlcA-(1-&gt;](n)-4)-beta-D-Xyl-(1-&gt;4)-Rib-ol-P-Rib-ol-P-3-beta-D-GalNAc-(1-&gt;3)-beta-D-GlcNAc-(1-&gt;4)-O-6-P-alpha-D-Man}-L-Thr-[protein] + UDP + H(+). The catalysed reaction is 3-O-{beta-D-GlcA-(1-&gt;[3)-alpha-D-Xyl-(1-&gt;3)-beta-D-GlcA-(1-&gt;](n)-4)-beta-D-Xyl-(1-&gt;4)-Rib-ol-P-Rib-ol-P-3-beta-D-GalNAc-(1-&gt;3)-beta-D-GlcNAc-(1-&gt;4)-O-6-P-alpha-D-Man}-L-Thr-[protein] + UDP-alpha-D-xylose = 3-O-{(1-&gt;[3)-alpha-D-Xyl-(1-&gt;3)-beta-D-GlcA-(1-&gt;](n+1)-4)-beta-D-Xyl-(1-&gt;4)-Rib-ol-P-Rib-ol-P-3-beta-D-GalNAc-(1-&gt;3)-beta-D-GlcNAc-(1-&gt;4)-O-6-P-alpha-D-Man}-L-Thr-[protein] + UDP + H(+). Its pathway is protein modification; protein glycosylation. Functionally, bifunctional glycosyltransferase with both alpha-1,3-xylosyltransferase and beta-1,3-glucuronyltransferase activities involved in the maturation of alpha-dystroglycan (DAG1) by glycosylation leading to DAG1 binding to laminin G-like domain-containing extracellular proteins with high affinity. Elongates the glucuronyl-beta-1,4-xylose-beta disaccharide primer structure initiated by B4GAT1 by adding repeating units [-3-Xylose-alpha-1,3-GlcA-beta-1-] to produce a heteropolysaccharide. Requires the phosphorylation of core M3 (O-mannosyl trisaccharide) by POMK to elongate the glucuronyl-beta-1,4-xylose-beta disaccharide primer. Plays a key role in skeletal muscle function and regeneration. The protein is Xylosyl- and glucuronyltransferase LARGE1 of Homo sapiens (Human).